We begin with the raw amino-acid sequence, 1029 residues long: Putative B3 domain-containing protein Os03g0621600 (1029 aa).

DNA-binding regions (TF-B3) lie at residues 147 to 240 (DTYF…FDPS), 339 to 430 (VAVM…RKMK), and 450 to 543 (EKYF…FDPS). Residues 572–605 (TSYHDQPKGNKHWMQKDSSSKGNKIGNTRSSNTP) form a disordered region. Residues 591-605 (SKGNKIGNTRSSNTP) show a composition bias toward polar residues. Residues 731–824 (YKNFFKVMIG…KLKVLIFGPS (94 aa)) constitute a DNA-binding region (TF-B3 4). Residues 852–867 (SSNSHDLPVKSPQNVS) show a composition bias toward polar residues. The tract at residues 852–882 (SSNSHDLPVKSPQNVSKSEKQWDSSEQENDT) is disordered. Residues 934–1029 (GCILRKSRVH…SMNVHIIPKK (96 aa)) constitute a DNA-binding region (TF-B3 5).

The protein resides in the nucleus. The chain is Putative B3 domain-containing protein Os03g0621600 from Oryza sativa subsp. japonica (Rice).